Here is a 435-residue protein sequence, read N- to C-terminus: Trigger factor (435 aa).

A PPIase FKBP-type domain is found at 163 to 248 (GDRVTIDFEG…LTRIEAQNLP (86 aa)).

This sequence belongs to the FKBP-type PPIase family. Tig subfamily.

The protein resides in the cytoplasm. It catalyses the reaction [protein]-peptidylproline (omega=180) = [protein]-peptidylproline (omega=0). Its function is as follows. Involved in protein export. Acts as a chaperone by maintaining the newly synthesized protein in an open conformation. Functions as a peptidyl-prolyl cis-trans isomerase. The protein is Trigger factor of Leptothrix cholodnii (strain ATCC 51168 / LMG 8142 / SP-6) (Leptothrix discophora (strain SP-6)).